Consider the following 553-residue polypeptide: Putative transport protein YidE (553 aa).

The next 5 helical transmembrane spans lie at Ile-4–Val-24, Gly-28–Ser-48, Phe-65–Ser-85, Leu-95–Phe-115, and Met-158–Leu-178. RCK C-terminal domains lie at Gln-191–Gln-276 and Asp-279–Asn-361. Transmembrane regions (helical) follow at residues Met-371 to Val-391, Gly-393 to Leu-413, Ile-439 to Val-459, Leu-464 to Leu-484, Tyr-493 to Ala-513, and Leu-533 to Gly-553.

This sequence belongs to the AAE transporter (TC 2.A.81) family. YidE subfamily.

It is found in the cell membrane. This is Putative transport protein YidE from Shigella boydii serotype 18 (strain CDC 3083-94 / BS512).